The chain runs to 556 residues: 2-succinyl-5-enolpyruvyl-6-hydroxy-3-cyclohexene-1-carboxylate synthase (556 aa).

Belongs to the TPP enzyme family. MenD subfamily. Homodimer. Requires Mg(2+) as cofactor. It depends on Mn(2+) as a cofactor. Thiamine diphosphate is required as a cofactor.

The catalysed reaction is isochorismate + 2-oxoglutarate + H(+) = 5-enolpyruvoyl-6-hydroxy-2-succinyl-cyclohex-3-ene-1-carboxylate + CO2. Its pathway is quinol/quinone metabolism; 1,4-dihydroxy-2-naphthoate biosynthesis; 1,4-dihydroxy-2-naphthoate from chorismate: step 2/7. It participates in quinol/quinone metabolism; menaquinone biosynthesis. In terms of biological role, catalyzes the thiamine diphosphate-dependent decarboxylation of 2-oxoglutarate and the subsequent addition of the resulting succinic semialdehyde-thiamine pyrophosphate anion to isochorismate to yield 2-succinyl-5-enolpyruvyl-6-hydroxy-3-cyclohexene-1-carboxylate (SEPHCHC). The polypeptide is 2-succinyl-5-enolpyruvyl-6-hydroxy-3-cyclohexene-1-carboxylate synthase (Enterobacter sp. (strain 638)).